Consider the following 147-residue polypeptide: Hemoglobin subunit epsilon-4 (147 aa).

In terms of domain architecture, Globin spans 3–147 (HFTTEEKAAV…VANALAHKYH (145 aa)). Residues His64 and His93 each coordinate heme b.

It belongs to the globin family. In terms of tissue distribution, red blood cells.

Its function is as follows. Hemoglobin epsilon chain is a beta-type chain found in early embryos. This Bos taurus (Bovine) protein is Hemoglobin subunit epsilon-4 (HBE4).